Reading from the N-terminus, the 105-residue chain is Replication restart protein PriB (105 aa).

An SSB domain is found at 1–102 (MTANRLVLTG…LHAEQIELID (102 aa)).

It belongs to the PriB family. Homodimer. Interacts with PriA and DnaT. Component of the replication restart primosome. Primosome assembly occurs via a 'hand-off' mechanism. PriA binds to replication forks, subsequently PriB then DnaT bind; DnaT then displaces ssDNA to generate the helicase loading substrate.

In terms of biological role, involved in the restart of stalled replication forks, which reloads the replicative helicase on sites other than the origin of replication; the PriA-PriB pathway is the major replication restart pathway. During primosome assembly it facilitates complex formation between PriA and DnaT on DNA; stabilizes PriA on DNA. Stimulates the DNA unwinding activity of PriA helicase. This Proteus mirabilis (strain HI4320) protein is Replication restart protein PriB.